Reading from the N-terminus, the 290-residue chain is MSGPVTEAARAKINLTLRVLGKRADGYHELQSLVVFAQSGDRLTAREADELRLDVAGRFAAALQGEPDNLVLRAARMLREETGIKSGAHLTLEKNLPVASGIGGGSADAAAALRALTALWGVAPGDEVLSRIAAALGADVLVCLHSRTAMMWGKGEKIMPLADLPRFWLVLANAGIALSTAAVFRELAAAPLAAAPSDPAPVPPGTLDDLAAWLAAEGNDLEPPALTLAPEIGETISALALTAGCLLARMSGSGATCFGLYAAEEEAREAALVLQAAHPGWWLEVSAAGG.

The active site involves lysine 12. ATP is bound at residue 97-107; it reads PVASGIGGGSA. Aspartate 139 is a catalytic residue.

It belongs to the GHMP kinase family. IspE subfamily.

The enzyme catalyses 4-CDP-2-C-methyl-D-erythritol + ATP = 4-CDP-2-C-methyl-D-erythritol 2-phosphate + ADP + H(+). Its pathway is isoprenoid biosynthesis; isopentenyl diphosphate biosynthesis via DXP pathway; isopentenyl diphosphate from 1-deoxy-D-xylulose 5-phosphate: step 3/6. Its function is as follows. Catalyzes the phosphorylation of the position 2 hydroxy group of 4-diphosphocytidyl-2C-methyl-D-erythritol. This chain is 4-diphosphocytidyl-2-C-methyl-D-erythritol kinase, found in Parvibaculum lavamentivorans (strain DS-1 / DSM 13023 / NCIMB 13966).